The sequence spans 542 residues: Calcium-dependent protein kinase 15 (542 aa).

Positions 1–73 (MGARASRHRQ…QAPQQAAAED (73 aa)) are disordered. The N-myristoyl glycine moiety is linked to residue G2. Residues 12 to 21 (PDQSQSQSPS) show a composition bias toward low complexity. A compositionally biased stretch (basic residues) spans 22 to 40 (PHHKHHHHHQTTRAPKPKP). A compositionally biased stretch (pro residues) spans 41–60 (KPQPPPPQQPRSQPPPPPRH). The span at 61 to 71 (QPQQAPQQAAA) shows a compositional bias: low complexity. The region spanning 90 to 348 (YTFGRELGRG…AAEILNHPWI (259 aa)) is the Protein kinase domain. Residues 96–104 (LGRGQFGVT) and K119 each bind ATP. The active-site Proton acceptor is the D214. The segment at 354–384 (APDKPLDITVISRMKQFRAMNKLKKVALKVV) is autoinhibitory domain. EF-hand domains lie at 391–426 (EEIVGLKEMFKSLDTDNSGTITLEELRAGLPKLGTK), 427–462 (ISESELRQLMEAADVDGNGSIDYVEFISATMHMNRL), 463–497 (EKEDHIYKAFEYFDKDHSGFITVDELEEALTKYDM), and 498–533 (GDEATIKEIIAEVDTDHDGRINYQEFVAMMKNNSPE). 19 residues coordinate Ca(2+): D404, D406, S408, T410, E415, D440, D442, N444, S446, E451, D476, D478, S480, E487, D511, D513, D515, R517, and E522.

The protein belongs to the protein kinase superfamily. Ser/Thr protein kinase family. CDPK subfamily.

The protein resides in the membrane. The enzyme catalyses L-seryl-[protein] + ATP = O-phospho-L-seryl-[protein] + ADP + H(+). It catalyses the reaction L-threonyl-[protein] + ATP = O-phospho-L-threonyl-[protein] + ADP + H(+). With respect to regulation, activated by calcium. Autophosphorylation may play an important role in the regulation of the kinase activity. May play a role in signal transduction pathways that involve calcium as a second messenger. The protein is Calcium-dependent protein kinase 15 of Oryza sativa subsp. japonica (Rice).